We begin with the raw amino-acid sequence, 122 residues long: UPF0102 protein R00337 (122 aa).

Belongs to the UPF0102 family.

The chain is UPF0102 protein R00337 from Rhizobium meliloti (strain 1021) (Ensifer meliloti).